The following is a 271-amino-acid chain: Mannosyl-3-phosphoglycerate phosphatase (271 aa).

The Nucleophile role is filled by Asp-13. 3 residues coordinate Mg(2+): Asp-13, Asp-15, and Asp-214.

Belongs to the HAD-like hydrolase superfamily. MPGP family. Mg(2+) serves as cofactor.

It is found in the cytoplasm. It carries out the reaction 2-O-(alpha-D-mannosyl)-3-phosphoglycerate + H2O = (2R)-2-O-(alpha-D-mannosyl)-glycerate + phosphate. The chain is Mannosyl-3-phosphoglycerate phosphatase (yedP) from Shigella boydii serotype 4 (strain Sb227).